Here is a 564-residue protein sequence, read N- to C-terminus: Serine/threonine-protein kinase PknA (564 aa).

A Protein kinase domain is found at 9-271 (YRVIKTLGSG…TAREMLEALQ (263 aa)). ATP-binding positions include 15–23 (LGSGGFGET) and Lys40. The active-site Proton acceptor is Asp139. A compositionally biased stretch (polar residues) spans 360–406 (QPVTQTTSLPSETTISNNDTPTVEPSPTDTPETPISQTVTQDPTPQA). The tract at residues 360 to 458 (QPVTQTTSLP…PVEATDRPSP (99 aa)) is disordered. Low complexity predominate over residues 428–445 (TTEPTTSVPQPTTPSEPQ).

Belongs to the protein kinase superfamily. Ser/Thr protein kinase family.

The catalysed reaction is L-seryl-[protein] + ATP = O-phospho-L-seryl-[protein] + ADP + H(+). The enzyme catalyses L-threonyl-[protein] + ATP = O-phospho-L-threonyl-[protein] + ADP + H(+). Its function is as follows. Probably required for both normal cellular growth and differentiation. Inactivation of pknA leads to colonies that appear light green and rough in the absence of combined nitrogen. The protein is Serine/threonine-protein kinase PknA (pknA) of Nostoc sp. (strain PCC 7120 / SAG 25.82 / UTEX 2576).